The following is a 441-amino-acid chain: Membrane-bound protease PH1510 (441 aa).

A signal peptide spans 1-20 (MRRILLSMIVLIFLASPILA). Position 64–67 (64–67 (GGRA)) interacts with substrate. The active-site Nucleophile is the serine 97. 119 to 124 (ACRPIL) lines the substrate pocket. Lysine 138 (proton donor/acceptor) is an active-site residue. 4 helical membrane passes run 239–259 (VAYL…LTPG), 271–291 (IILA…ILLI), 307–327 (FGLF…LLFG), and 344–364 (ILII…MAAV).

The protein belongs to the peptidase S14 family. In terms of assembly, homodimer.

It localises to the membrane. With respect to regulation, inhibited by divalent metal cations, including Mg(2+), Mn(2+), Ca(2+) and Zn(2+). Mildly inhibited by 0.01 % SDS and 0.1% dodecyl-beta-D-maltoside. Activity is nearly abolished by 1 % SDS. In terms of biological role, protease that cleaves its substrates preferentially near hydrophobic or aromatic amino acid residues. Can degrade casein and the stomatin homolog PH1511 (in vitro). The protein is Membrane-bound protease PH1510 of Pyrococcus horikoshii (strain ATCC 700860 / DSM 12428 / JCM 9974 / NBRC 100139 / OT-3).